Reading from the N-terminus, the 592-residue chain is UPF0329 protein ECU01_0110/ECU01_1500/ECU08_0040 (592 aa).

2 stretches are compositionally biased toward basic and acidic residues: residues 306-339 (RQRR…SKEK) and 353-362 (EAKEEEKKES). The disordered stretch occupies residues 306-404 (RQRRREREIE…RKRYKIHRRV (99 aa)).

The protein belongs to the UPF0329 family.

This Encephalitozoon cuniculi (strain GB-M1) (Microsporidian parasite) protein is UPF0329 protein ECU01_0110/ECU01_1500/ECU08_0040.